The sequence spans 279 residues: Vacuolar iron transporter cccA (279 aa).

The segment at 1-44 (MLGGRHSHWSPQDLEEQAFSPYGTFPPSPTESTETSSSISSTRP) is disordered. Residues 30–44 (TESTETSSSISSTRP) show a composition bias toward low complexity. A run of 5 helical transmembrane segments spans residues 55–75 (ILGL…LSAL), 80–100 (VVVV…GLGG), 185–205 (ITLA…YFMV), 208–228 (VLVA…VFGY), and 243–263 (IVAG…AAGA).

The protein belongs to the CCC1 family.

It is found in the vacuole membrane. It catalyses the reaction Fe(2+)(in) = Fe(2+)(out). Functionally, vacuolar iron transporter involved in the transfer of iron from the cytosol to the vacuole for intracellular iron storage. Plays an essential role in iron detoxification during high iron conditions. The protein is Vacuolar iron transporter cccA of Arthroderma benhamiae (strain ATCC MYA-4681 / CBS 112371) (Trichophyton mentagrophytes).